The primary structure comprises 337 residues: BRI1 kinase inhibitor 1 (337 aa).

Positions 1-25 (METNLQQVKNSSQTFSEKQNPKQEA) are enriched in polar residues. Disordered stretches follow at residues 1-38 (METNLQQVKNSSQTFSEKQNPKQEASPSPISSTCSSPS) and 51-72 (SSSSKHISPTLRSPSKTTSSYQ). The span at 26 to 38 (SPSPISSTCSSPS) shows a compositional bias: low complexity. Position 211 is a phosphotyrosine (Tyr211). Residues 270-310 (SAPASMRTSPTNSGHLRVSTAGLSSSSGSTSSSSSDSTMEE) form a disordered region. The segment covering 288-310 (STAGLSSSSGSTSSSSSDSTMEE) has biased composition (low complexity).

Interacts (via C-terminus) with BRI1 (via kinase domain). Phosphorylated on Tyr-211 in response to brassinosteroid perception, leading to its inactivation: once phosphorylated, displaced into the cytosol where it is inactive. Expressed in leaves, petioles, shoot apices, hypocotyls, roots and flowers.

The protein resides in the cell membrane. It is found in the cytoplasm. In terms of biological role, negative regulator of brassinosteroid signaling. When associated to the membrane, limits the interaction of BRI1 with BAK1 by binding to the kinase-inactive form of BRI1. The protein is BRI1 kinase inhibitor 1 (BKI1) of Arabidopsis thaliana (Mouse-ear cress).